Consider the following 329-residue polypeptide: Biotin--protein ligase 2 (329 aa).

Residues 67–251 (ISTHRFGRFL…KFENFFDLFM (185 aa)) form the BPL/LPL catalytic domain. Biotin is bound by residues 84-85 (ST), Gln-107, 111-113 (RGR), and Lys-182.

It belongs to the biotin--protein ligase family. Highly expressed in seeds. Expressed in roots, leaves, stems, flowers and siliques.

It is found in the cytoplasm. In terms of biological role, seems to have no or limited implication in biotin-dependent carboxylase biotinylation in planta. This Arabidopsis thaliana (Mouse-ear cress) protein is Biotin--protein ligase 2 (HCS2).